The chain runs to 188 residues: Elongation factor P (188 aa).

At Lys34 the chain carries N6-(3,6-diaminohexanoyl)-5-hydroxylysine.

It belongs to the elongation factor P family. In terms of processing, may be beta-lysylated on the epsilon-amino group of Lys-34 by the combined action of EpmA and EpmB, and then hydroxylated on the C5 position of the same residue by EpmC (if this protein is present). Lysylation is critical for the stimulatory effect of EF-P on peptide-bond formation. The lysylation moiety may extend toward the peptidyltransferase center and stabilize the terminal 3-CCA end of the tRNA. Hydroxylation of the C5 position on Lys-34 may allow additional potential stabilizing hydrogen-bond interactions with the P-tRNA.

It is found in the cytoplasm. The protein operates within protein biosynthesis; polypeptide chain elongation. Functionally, involved in peptide bond synthesis. Alleviates ribosome stalling that occurs when 3 or more consecutive Pro residues or the sequence PPG is present in a protein, possibly by augmenting the peptidyl transferase activity of the ribosome. Modification of Lys-34 is required for alleviation. In Coxiella burnetii (strain CbuK_Q154) (Coxiella burnetii (strain Q154)), this protein is Elongation factor P.